A 705-amino-acid polypeptide reads, in one-letter code: DNA polymerase alpha subunit B (705 aa).

Residues 115-199 (KKRKLHGPFS…TPTTSRQNVP (85 aa)) form a disordered region. A compositionally biased stretch (polar residues) spans 125–134 (LSDSKQTYNV). The residue at position 126 (S126) is a Phosphoserine. Residues 181-197 (STFQTPTTNTPTTSRQN) show a composition bias toward low complexity.

This sequence belongs to the DNA polymerase alpha subunit B family. As to quaternary structure, DNA polymerase alpha:primase is a four subunit enzyme complex, which is assembled throughout the cell cycle, and consists of the two DNA polymerase subunits A POL1 and B POL12, and the DNA primase large PRI2 and small PRI1 subunits. Subunit B POL12 binds to subunit A POL1. Phosphorylated in a cell cycle-dependent manner.

It localises to the nucleus. Functionally, non-catalytic component of DNA polymerase alpha, which in a complex with DNA primase (DNA polymerase alpha:primase) constitutes a replicative polymerase. POL12 may play an essential role at the early stage of chromosomal DNA replication by coupling DNA polymerase alpha to the cellular replication machinery. Interacts with MCM10. In Saccharomyces cerevisiae (strain ATCC 204508 / S288c) (Baker's yeast), this protein is DNA polymerase alpha subunit B (POL12).